A 92-amino-acid polypeptide reads, in one-letter code: MARSLKKNPFVAFHLLEKVEKLNIRKEKEIIVTWSRASTIIPTMVGHTIAVHNGKEHLPVFITDRMVGHKLGEFAPTLTFRGHARNDNRSRR.

Belongs to the universal ribosomal protein uS19 family.

Its subcellular location is the plastid. The protein resides in the chloroplast. Functionally, protein S19 forms a complex with S13 that binds strongly to the 16S ribosomal RNA. This Ceratophyllum demersum (Rigid hornwort) protein is Small ribosomal subunit protein uS19c.